Reading from the N-terminus, the 552-residue chain is Two-component response regulator ARR10 (552 aa).

The Response regulatory domain occupies 18-133 (RVLAVDDDQT…ELKNIWQHVV (116 aa)). At D69 the chain carries 4-aspartylphosphate. The tract at residues 139–181 (KKNKSNVSNGSGNCDKANRKRKEQYEEEEEEERGNDNDDPTAQ) is disordered. A coiled-coil region spans residues 151–173 (NCDKANRKRKEQYEEEEEEERGN). Residues 163-177 (YEEEEEEERGNDNDD) are compositionally biased toward acidic residues. The Nuclear localization signal signature appears at 182 to 185 (KKPR). The segment at residues 185–235 (RVLWTHELHNKFLAAVDHLGVERAVPKKILDLMNVDKLTRENVASHLQKFR) is a DNA-binding region (myb-like GARP).

The protein belongs to the ARR family. Type-B subfamily. As to quaternary structure, binds the target DNA as a monomer. In terms of processing, two-component system major event consists of a His-to-Asp phosphorelay between a sensor histidine kinase (HK) and a response regulator (RR). In plants, the His-to-Asp phosphorelay involves an additional intermediate named Histidine-containing phosphotransfer protein (HPt). This multistep phosphorelay consists of a His-Asp-His-Asp sequential transfer of a phosphate group between first a His and an Asp of the HK protein, followed by the transfer to a conserved His of the HPt protein and finally the transfer to an Asp in the receiver domain of the RR protein. As to expression, detected in the whole plant. Predominantly expressed in roots and leaves.

Its subcellular location is the nucleus. Transcriptional activator that binds specifically to the DNA sequence 5'-[AG]GATT-3'. Functions as a response regulator involved in His-to-Asp phosphorelay signal transduction system. Phosphorylation of the Asp residue in the receiver domain activates the ability of the protein to promote the transcription of target genes. Could directly activate some type-A response regulators in response to cytokinins. This is Two-component response regulator ARR10 (ARR10) from Arabidopsis thaliana (Mouse-ear cress).